The following is a 337-amino-acid chain: Ketol-acid reductoisomerase (NADP(+)) (337 aa).

A KARI N-terminal Rossmann domain is found at Val-3–Thr-183. NADP(+) is bound by residues Tyr-26–Gln-29, Lys-49, Ser-52, Ser-54, and Asp-84–Gln-87. His-109 is a catalytic residue. Residue Gly-135 coordinates NADP(+). The KARI C-terminal knotted domain maps to Thr-184 to Val-329. The Mg(2+) site is built by Asp-192, Glu-196, Glu-228, and Glu-232. Ser-253 provides a ligand contact to substrate.

Belongs to the ketol-acid reductoisomerase family. Mg(2+) serves as cofactor.

It carries out the reaction (2R)-2,3-dihydroxy-3-methylbutanoate + NADP(+) = (2S)-2-acetolactate + NADPH + H(+). It catalyses the reaction (2R,3R)-2,3-dihydroxy-3-methylpentanoate + NADP(+) = (S)-2-ethyl-2-hydroxy-3-oxobutanoate + NADPH + H(+). Its pathway is amino-acid biosynthesis; L-isoleucine biosynthesis; L-isoleucine from 2-oxobutanoate: step 2/4. It functions in the pathway amino-acid biosynthesis; L-valine biosynthesis; L-valine from pyruvate: step 2/4. Involved in the biosynthesis of branched-chain amino acids (BCAA). Catalyzes an alkyl-migration followed by a ketol-acid reduction of (S)-2-acetolactate (S2AL) to yield (R)-2,3-dihydroxy-isovalerate. In the isomerase reaction, S2AL is rearranged via a Mg-dependent methyl migration to produce 3-hydroxy-3-methyl-2-ketobutyrate (HMKB). In the reductase reaction, this 2-ketoacid undergoes a metal-dependent reduction by NADPH to yield (R)-2,3-dihydroxy-isovalerate. The chain is Ketol-acid reductoisomerase (NADP(+)) from Rhodococcus jostii (strain RHA1).